We begin with the raw amino-acid sequence, 775 residues long: MPVKLRIFLSHGEASCAKEPETFLGSNRVRPMSISNSIKITPELVASHGLKPDEYQRILDLIGREPSFTELGIFSAMWNEHCSYKSSKKWLKTLPTTGPRVIQGPGENAGVVDIDDGDCVVFKMESHNHPSYIEPYQGAATGVGGILRDVFTMGARPIAAMNALRFGAPDHPKTRHLVAGVVAGVGGYGNSFGVPTVGGEVEFDPRYNGNILVNAFAAGLAKSNAIFLSEAKGVGLPVVYLGAKTGRDGVGGATMASAEFDESIEEKRPTVQVGDPFTEKCLLEACLELMKTGAVIAIQDMGAAGLTCSAVEMGAKGDLGIELDLNAVPVREERMTAYEMMLSESQERMLMVLEPSKEEVAKAIFVKWGLDFAIVGKTTDDLRFRVLHNGEEVANLPIKELGDEAPEYDRPWTPAKVPAALSETDIPEADIADALVSLVGSANNSSRRWVYEQYDTLIQGNSLQLPGGDAGVVRVEGHDKKALAFSSDVTPRYVEADAFEGGKQAVAECWRNITATGALPLAATDNLNFGNPEKPEIMSQLVHAIKGIGEACRVLEFPIVSGNVSLYNETNGQAILPTPTIGGVGLLKDWGRMARIRFAAADEVVLLVGAPAGLGTHIAQSVYMRDVHGRTDGPAPHVDLIAEKKNGDFVRGLITEGLTTAVHDCSSGGLALAVAEMAISSGIGATIDAVEGHNPILTFYGEDQARYVLTVKKSDLDKVRAAAKAAGVSCPLIGTTGGSTVKLGTARAVEIKELHLAYESWFPQFMDGETLIAAE.

Residue His81 is part of the active site. ATP contacts are provided by Tyr84 and Lys123. Glu125 is a Mg(2+) binding site. Substrate contacts are provided by residues 126 to 129 (SHNH) and Arg148. His127 acts as the Proton acceptor in catalysis. A Mg(2+)-binding site is contributed by Asp149. Gln272 lines the substrate pocket. Asp300 is a Mg(2+) binding site. 344 to 346 (ESQ) lines the substrate pocket. ATP-binding residues include Asp525 and Gly562. Asn563 is a Mg(2+) binding site. Ser565 contributes to the substrate binding site.

Belongs to the FGAMS family. As to quaternary structure, monomer. Part of the FGAM synthase complex composed of 1 PurL, 1 PurQ and 2 PurS subunits.

The protein resides in the cytoplasm. It carries out the reaction N(2)-formyl-N(1)-(5-phospho-beta-D-ribosyl)glycinamide + L-glutamine + ATP + H2O = 2-formamido-N(1)-(5-O-phospho-beta-D-ribosyl)acetamidine + L-glutamate + ADP + phosphate + H(+). The protein operates within purine metabolism; IMP biosynthesis via de novo pathway; 5-amino-1-(5-phospho-D-ribosyl)imidazole from N(2)-formyl-N(1)-(5-phospho-D-ribosyl)glycinamide: step 1/2. Functionally, part of the phosphoribosylformylglycinamidine synthase complex involved in the purines biosynthetic pathway. Catalyzes the ATP-dependent conversion of formylglycinamide ribonucleotide (FGAR) and glutamine to yield formylglycinamidine ribonucleotide (FGAM) and glutamate. The FGAM synthase complex is composed of three subunits. PurQ produces an ammonia molecule by converting glutamine to glutamate. PurL transfers the ammonia molecule to FGAR to form FGAM in an ATP-dependent manner. PurS interacts with PurQ and PurL and is thought to assist in the transfer of the ammonia molecule from PurQ to PurL. The chain is Phosphoribosylformylglycinamidine synthase subunit PurL from Agrobacterium fabrum (strain C58 / ATCC 33970) (Agrobacterium tumefaciens (strain C58)).